Here is a 562-residue protein sequence, read N- to C-terminus: Arginine--tRNA ligase (562 aa).

The 'HIGH' region motif lies at 122 to 132; sequence PNIAKDMHVGH.

This sequence belongs to the class-I aminoacyl-tRNA synthetase family. In terms of assembly, monomer.

Its subcellular location is the cytoplasm. It catalyses the reaction tRNA(Arg) + L-arginine + ATP = L-arginyl-tRNA(Arg) + AMP + diphosphate. The chain is Arginine--tRNA ligase from Chlamydia felis (strain Fe/C-56) (Chlamydophila felis).